A 148-amino-acid polypeptide reads, in one-letter code: Snaclec 8 (148 aa).

Positions 1 to 23 (MGRFIFVSFSLLVVFFSLSGTEA) are cleaved as a signal peptide. In terms of domain architecture, C-type lectin spans 34 to 148 (YDQNCYKAFE…DTQFRLQEPG (115 aa)).

This sequence belongs to the snaclec family. In terms of assembly, heterodimer; disulfide-linked. Contains disulfide bonds. As to expression, expressed by the venom gland.

The protein localises to the secreted. In terms of biological role, interferes with one step of hemostasis (modulation of platelet aggregation, or coagulation cascade, for example). The chain is Snaclec 8 from Echis carinatus sochureki (Saw-scaled viper).